The primary structure comprises 245 residues: 3-deoxy-manno-octulosonate cytidylyltransferase (245 aa).

This sequence belongs to the KdsB family.

It localises to the cytoplasm. The enzyme catalyses 3-deoxy-alpha-D-manno-oct-2-ulosonate + CTP = CMP-3-deoxy-beta-D-manno-octulosonate + diphosphate. Its pathway is nucleotide-sugar biosynthesis; CMP-3-deoxy-D-manno-octulosonate biosynthesis; CMP-3-deoxy-D-manno-octulosonate from 3-deoxy-D-manno-octulosonate and CTP: step 1/1. The protein operates within bacterial outer membrane biogenesis; lipopolysaccharide biosynthesis. Functionally, activates KDO (a required 8-carbon sugar) for incorporation into bacterial lipopolysaccharide in Gram-negative bacteria. This Rhodopseudomonas palustris (strain TIE-1) protein is 3-deoxy-manno-octulosonate cytidylyltransferase.